The sequence spans 316 residues: Beta-ketoacyl-[acyl-carrier-protein] synthase III 1 (316 aa).

Residues Cys-112 and His-243 contribute to the active site. The tract at residues 244-248 (QANYR) is ACP-binding. The active site involves Asn-273.

It belongs to the thiolase-like superfamily. FabH family. Homodimer.

It localises to the cytoplasm. The catalysed reaction is malonyl-[ACP] + acetyl-CoA + H(+) = 3-oxobutanoyl-[ACP] + CO2 + CoA. The protein operates within lipid metabolism; fatty acid biosynthesis. Functionally, catalyzes the condensation reaction of fatty acid synthesis by the addition to an acyl acceptor of two carbons from malonyl-ACP. Catalyzes the first condensation reaction which initiates fatty acid synthesis and may therefore play a role in governing the total rate of fatty acid production. Possesses both acetoacetyl-ACP synthase and acetyl transacylase activities. Its substrate specificity determines the biosynthesis of branched-chain and/or straight-chain of fatty acids. The polypeptide is Beta-ketoacyl-[acyl-carrier-protein] synthase III 1 (Vibrio vulnificus (strain CMCP6)).